The primary structure comprises 510 residues: NAD(P)H-quinone oxidoreductase subunit 2 A, chloroplastic (510 aa).

13 helical membrane-spanning segments follow: residues 24–44 (LLLFDGSFIFPECILIFGLIL), 57–77 (IPWLYFISSTSLVMSITALLF), 99–119 (IFQFLILLCSTLCIPLSVEYI), 124–144 (MAITEFLLFVLTATLGGMFLC), 149–169 (LITIFVAPECFSLCSYLLSGY), 183–203 (YLLMGGASSSILVHGFSWLYG), 227–247 (PGISIALIFITVGIGFKLSPA), 295–315 (WHLLLEILAILSMILGNLIAI), 323–343 (MLAYSSIGQIGYVIIGIIVGD), 354–374 (YMLFYISMNLGTFACIVSFGL), 395–415 (ALSLALCLLSLGGLPPLAGFF), 418–438 (LHLFWCGWQAGLYFLVSIGLL), and 484–504 (MIVCVIASTIPGISMNPIIAI).

Belongs to the complex I subunit 2 family. As to quaternary structure, NDH is composed of at least 16 different subunits, 5 of which are encoded in the nucleus.

It is found in the plastid. It localises to the chloroplast thylakoid membrane. It catalyses the reaction a plastoquinone + NADH + (n+1) H(+)(in) = a plastoquinol + NAD(+) + n H(+)(out). It carries out the reaction a plastoquinone + NADPH + (n+1) H(+)(in) = a plastoquinol + NADP(+) + n H(+)(out). In terms of biological role, NDH shuttles electrons from NAD(P)H:plastoquinone, via FMN and iron-sulfur (Fe-S) centers, to quinones in the photosynthetic chain and possibly in a chloroplast respiratory chain. The immediate electron acceptor for the enzyme in this species is believed to be plastoquinone. Couples the redox reaction to proton translocation, and thus conserves the redox energy in a proton gradient. The polypeptide is NAD(P)H-quinone oxidoreductase subunit 2 A, chloroplastic (Vitis vinifera (Grape)).